The sequence spans 829 residues: Transcription activator GutR (829 aa).

A DNA-binding region (H-T-H motif) is located at residues 42 to 61 (IDKIALQLGVSPNTIKSWIG). 200 to 207 (GWAGMGKT) contacts ATP. 3 TPR repeats span residues 697 to 730 (HRVL…SSTY), 736 to 769 (IEAY…KHNA), and 775 to 808 (IYYH…IDSW).

Functionally, activator of the glucitol dehydrogenase gene (gutB). The polypeptide is Transcription activator GutR (gutR) (Bacillus subtilis (strain 168)).